Here is a 165-residue protein sequence, read N- to C-terminus: Endoribonuclease YbeY (165 aa).

Residues His-130, His-134, and His-140 each coordinate Zn(2+).

This sequence belongs to the endoribonuclease YbeY family. Zn(2+) is required as a cofactor.

It is found in the cytoplasm. Single strand-specific metallo-endoribonuclease involved in late-stage 70S ribosome quality control and in maturation of the 3' terminus of the 16S rRNA. The protein is Endoribonuclease YbeY of Streptococcus pyogenes serotype M1.